Here is a 215-residue protein sequence, read N- to C-terminus: UPF0323 lipoprotein jhp_0217 (215 aa).

Positions 1–27 (MKKPYRKISDYAIVGGLSALVMVSIVG) are cleaved as a signal peptide. Residue Cys28 is the site of N-palmitoyl cysteine attachment. Residue Cys28 is the site of S-diacylglycerol cysteine attachment. Residues 158–169 (QRTYKSPQAYQR) show a composition bias toward polar residues. The disordered stretch occupies residues 158–215 (QRTYKSPQAYQRSQNSFSKSAPSASSMGTASKGQSGFFGSSRPTSSPAISSGTRGFNA). Residues 170–183 (SQNSFSKSAPSASS) are compositionally biased toward low complexity. Polar residues predominate over residues 184–195 (MGTASKGQSGFF). Residues 197–208 (SSRPTSSPAISS) are compositionally biased toward low complexity.

It belongs to the UPF0323 family.

Its subcellular location is the cell membrane. The polypeptide is UPF0323 lipoprotein jhp_0217 (Helicobacter pylori (strain J99 / ATCC 700824) (Campylobacter pylori J99)).